The chain runs to 552 residues: MTPADLADLLRATAAKVLAERGLDPAVLPDEVTVERPRNPEHGDYATNLAMKVAKKAGTNPRDLAGWLAEALGAADGITSAEVAGPGFLNIRLAAAAQGAVLEQVLAAGSGYGTADTLRGTKINLEFVSANPTGPIHLGGTRWASVGDALGRILAAQGADVTREYYFNDHGAQIDRFANSLVAAATGQPTPDDGYAGAYIGEIAEQIVAEHPEAPTLPADQRHELFRAEGVELMFAHIKRTLHEFGTDFDVYFNESTLFASGAVEQAVETLKASGDLYEKDGAWWIASSEYGDDQDRVVIKSDGNAAYIAGDIAYFQNKRSRGFDLCIYMLGADHHGYIGRLKAAAAAFGDDPATVEVLIGQMVNLVRDGQAVKMSKRAGTVVTLDDLVEAIGVDAARYALVRWSVNSSVDIDLNLWTSQKNENPVYYVQYAHARTASIGRNAAAFDYASVTPDLSQLTAEEEGELIRTIGEYPRVVASAASLREPHRVARYLEELAGAYHRFQTNSKLRVLPLGDDPVSPLNAARLVLVNATRQVLANGLALLGVSAPEQM.

Positions 130-140 (ANPTGPIHLGG) match the 'HIGH' region motif.

The protein belongs to the class-I aminoacyl-tRNA synthetase family. Monomer.

It localises to the cytoplasm. The catalysed reaction is tRNA(Arg) + L-arginine + ATP = L-arginyl-tRNA(Arg) + AMP + diphosphate. In Nocardia farcinica (strain IFM 10152), this protein is Arginine--tRNA ligase.